The following is a 78-amino-acid chain: Small ribosomal subunit protein bS18 (78 aa).

This sequence belongs to the bacterial ribosomal protein bS18 family. Part of the 30S ribosomal subunit. Forms a tight heterodimer with protein bS6.

Binds as a heterodimer with protein bS6 to the central domain of the 16S rRNA, where it helps stabilize the platform of the 30S subunit. The polypeptide is Small ribosomal subunit protein bS18 (Clostridium novyi (strain NT)).